The primary structure comprises 127 residues: Holo-[acyl-carrier-protein] synthase (127 aa).

The Mg(2+) site is built by Asp-8 and Glu-56.

Belongs to the P-Pant transferase superfamily. AcpS family. Requires Mg(2+) as cofactor.

Its subcellular location is the cytoplasm. The catalysed reaction is apo-[ACP] + CoA = holo-[ACP] + adenosine 3',5'-bisphosphate + H(+). Functionally, transfers the 4'-phosphopantetheine moiety from coenzyme A to a Ser of acyl-carrier-protein. In Cytophaga hutchinsonii (strain ATCC 33406 / DSM 1761 / CIP 103989 / NBRC 15051 / NCIMB 9469 / D465), this protein is Holo-[acyl-carrier-protein] synthase.